The following is a 207-amino-acid chain: Guanylate kinase (207 aa).

One can recognise a Guanylate kinase-like domain in the interval 4–184 (GTLYIVSAPS…ALMDFKAIIR (181 aa)). 11–18 (APSGAGKS) contributes to the ATP binding site.

Belongs to the guanylate kinase family.

The protein localises to the cytoplasm. The enzyme catalyses GMP + ATP = GDP + ADP. It carries out the reaction dZMP + ATP = dZDP + ADP. The protein operates within purine metabolism. Its function is as follows. Essential for recycling GMP and indirectly, cGMP. (Microbial infection) Catalyzes the phosphorylation of dZMP to dZDP, when the bacterium is infected by a phage that produces the substrate for the synthesis of dZTP (2- amino-2'-deoxyadenosine 5'-triphosphate), which is then used by the phage as a DNA polymerase substrate. In Vibrio cholerae serotype O1 (strain ATCC 39315 / El Tor Inaba N16961), this protein is Guanylate kinase (gmk).